We begin with the raw amino-acid sequence, 553 residues long: Efflux pump mlcE (553 aa).

The segment covering 1-19 (MSEPLPPKEGEPRPQKEES) has biased composition (basic and acidic residues). A disordered region spans residues 1–29 (MSEPLPPKEGEPRPQKEESQNDTLEATES). A glycan (N-linked (GlcNAc...) asparagine) is linked at N21. 13 helical membrane passes run 41–61 (LVVA…SIIV), 77–96 (VGWY…PLAG), 101–121 (LLGL…GSVL), 136–156 (AVAG…LSTA), 164–184 (VLIG…PLLG), 196–216 (CFYI…VITI), 245–265 (LVGF…LEWG), 273–293 (SSVI…FVLW), 319–339 (LFMG…PIYF), 352–372 (VYML…GFAI), 376–396 (GYYL…AGLV), 440–460 (ALGI…FLDF), and 516–536 (TFYL…GMGW). N-linked (GlcNAc...) asparagine glycosylation occurs at N543.

The protein belongs to the major facilitator superfamily. TCR/Tet family.

Its subcellular location is the membrane. Functionally, efflux pump; part of the gene cluster that mediates the biosynthesis of compactin, also known as mevastatin or ML-236B, and which acts as a potent competitive inhibitor of HMG-CoA reductase. The protein is Efflux pump mlcE of Penicillium citrinum.